The sequence spans 34 residues: uncharacterized protein (34 aa).

This is an uncharacterized protein from Rhizobium radiobacter (Agrobacterium tumefaciens).